Here is a 247-residue protein sequence, read N- to C-terminus: MSPNPTSDLSAIEQLQKEKILNPAARGQVTQDLSENIILTTVDDLHNWARLSSLWPLLYGTACCFIEFAALIGSRFDFDRFGLVPRSSPRQADLIITAGTITMKMAPALVRLYEEMPDPKYVIAMGACTITGGMFSSDSTTAVRGVDKLIPVDVYIPGCPPRPEAIFDAIIKLRKKVSNETIQERSTVMEQTHRYYSTPHNMKAVSPILTGKYLATPTRQAPPKELTEAIGMEVPPALASQKQKEEA.

Residues C63, C64, C128, and C159 each coordinate [4Fe-4S] cluster. The interval 218 to 247 is disordered; it reads TRQAPPKELTEAIGMEVPPALASQKQKEEA.

This sequence belongs to the complex I 20 kDa subunit family. As to quaternary structure, NDH-1 can be composed of about 15 different subunits; different subcomplexes with different compositions have been identified which probably have different functions. [4Fe-4S] cluster serves as cofactor.

The protein resides in the cellular thylakoid membrane. It catalyses the reaction a plastoquinone + NADH + (n+1) H(+)(in) = a plastoquinol + NAD(+) + n H(+)(out). It carries out the reaction a plastoquinone + NADPH + (n+1) H(+)(in) = a plastoquinol + NADP(+) + n H(+)(out). In terms of biological role, NDH-1 shuttles electrons from an unknown electron donor, via FMN and iron-sulfur (Fe-S) centers, to quinones in the respiratory and/or the photosynthetic chain. The immediate electron acceptor for the enzyme in this species is believed to be plastoquinone. Couples the redox reaction to proton translocation, and thus conserves the redox energy in a proton gradient. Cyanobacterial NDH-1 also plays a role in inorganic carbon-concentration. In Crocosphaera subtropica (strain ATCC 51142 / BH68) (Cyanothece sp. (strain ATCC 51142)), this protein is NAD(P)H-quinone oxidoreductase subunit K.